The chain runs to 188 residues: Pro-adrenomedullin (188 aa).

An N-terminal signal peptide occupies residues 1–21 (MKLVPVALLYLGSLAFLGVDT). At arginine 41 the chain carries Arginine amide. Residues 45–92 (ELRESSSYPTGLADVKAGPVQTLIRPQDVKGASRSPQASSPDAARIRV) constitute a propeptide that is removed on maturation. The interval 69-89 (RPQDVKGASRSPQASSPDAAR) is disordered. A disulfide bridge links cysteine 110 with cysteine 115. The interval 129-175 (DKDKDGSAPRSKISPQGYGRRRRRSLPEAGLGRTLLQPPEPKLRGAP) is disordered. Tyrosine 146 carries the post-translational modification Tyrosine amide. Positions 153–188 (SLPEAGLGRTLLQPPEPKLRGAPDSRVHQVLATLRI) are cleaved as a propeptide — preproAM C-terminal fragment.

Belongs to the adrenomedullin family.

The protein resides in the secreted. In terms of biological role, adrenomedullin/ADM and proadrenomedullin N-20 terminal peptide/PAMP are peptide hormones that act as potent hypotensive and vasodilatator agents. Numerous actions have been reported most related to the physiologic control of fluid and electrolyte homeostasis. ADM function is mediated by the CALCRL-RAMP2 and CALCRL-RAMP3 receptor complexes with ADM showing the highest potency for the CALCRL-RAMP2 complex. This is Pro-adrenomedullin (ADM) from Bos taurus (Bovine).